The sequence spans 237 residues: Phosphoribosylaminoimidazole-succinocarboxamide synthase (237 aa).

The protein belongs to the SAICAR synthetase family.

It carries out the reaction 5-amino-1-(5-phospho-D-ribosyl)imidazole-4-carboxylate + L-aspartate + ATP = (2S)-2-[5-amino-1-(5-phospho-beta-D-ribosyl)imidazole-4-carboxamido]succinate + ADP + phosphate + 2 H(+). The protein operates within purine metabolism; IMP biosynthesis via de novo pathway; 5-amino-1-(5-phospho-D-ribosyl)imidazole-4-carboxamide from 5-amino-1-(5-phospho-D-ribosyl)imidazole-4-carboxylate: step 1/2. The protein is Phosphoribosylaminoimidazole-succinocarboxamide synthase of Citrobacter koseri (strain ATCC BAA-895 / CDC 4225-83 / SGSC4696).